The primary structure comprises 776 residues: DNA ligase (776 aa).

NAD(+) is bound by residues 31–35 (DAEYD), 80–81 (SL), and glutamate 112. Residue lysine 114 is the N6-AMP-lysine intermediate of the active site. NAD(+) is bound by residues arginine 135, glutamate 172, lysine 288, and lysine 312. Residues cysteine 406, cysteine 409, cysteine 436, and cysteine 442 each contribute to the Zn(2+) site. One can recognise a BRCT domain in the interval 693-776 (AEGLPLAGQT…TFLAEQGIAV (84 aa)).

This sequence belongs to the NAD-dependent DNA ligase family. LigA subfamily. The cofactor is Mg(2+). It depends on Mn(2+) as a cofactor.

It carries out the reaction NAD(+) + (deoxyribonucleotide)n-3'-hydroxyl + 5'-phospho-(deoxyribonucleotide)m = (deoxyribonucleotide)n+m + AMP + beta-nicotinamide D-nucleotide.. Functionally, DNA ligase that catalyzes the formation of phosphodiester linkages between 5'-phosphoryl and 3'-hydroxyl groups in double-stranded DNA using NAD as a coenzyme and as the energy source for the reaction. It is essential for DNA replication and repair of damaged DNA. In Pseudomonas putida (strain ATCC 47054 / DSM 6125 / CFBP 8728 / NCIMB 11950 / KT2440), this protein is DNA ligase.